Reading from the N-terminus, the 262-residue chain is MQVDLLSSAQSAHALHLFHQHSPLVHCMTNDVVQTFTANTLLVLGASPAMVIETEEASQFAAIASALLINVGTLTQLCAQSMCAAVEQAKSSQTPWTLDPVAVGALDYRRRFCLELLSHKPTAIRGNASEIMALAGIANGGRGVDTTDAAANAIPAAQTLARETGAIVVVTGEMDYVTDGHRIIGIHGGDPLMTKVVGTGCALSAVVAACCALPGDTLENVASACHWMKQAGERAVARSEGPGSFVPHFLDALWQLTQEVQA.

A substrate-binding site is contributed by methionine 50. ATP contacts are provided by arginine 125 and threonine 171. Glycine 198 lines the substrate pocket.

This sequence belongs to the Thz kinase family. The cofactor is Mg(2+).

The enzyme catalyses 5-(2-hydroxyethyl)-4-methylthiazole + ATP = 4-methyl-5-(2-phosphooxyethyl)-thiazole + ADP + H(+). It participates in cofactor biosynthesis; thiamine diphosphate biosynthesis; 4-methyl-5-(2-phosphoethyl)-thiazole from 5-(2-hydroxyethyl)-4-methylthiazole: step 1/1. Its function is as follows. Catalyzes the phosphorylation of the hydroxyl group of 4-methyl-5-beta-hydroxyethylthiazole (THZ). In Escherichia coli O139:H28 (strain E24377A / ETEC), this protein is Hydroxyethylthiazole kinase.